The chain runs to 974 residues: GATOR2 complex protein WDR59 (974 aa).

WD repeat units lie at residues 57-98, 103-143, 146-185, 189-229, 232-276, 278-318, and 319-362; these read QSKW…GEVG, GHTR…KPTV, SAVA…TAVE, AHLS…KYLN, PCQV…TPVH, FVGH…RVDS, and QMQR…TASH. The segment at 350-374 is disordered; the sequence is HTEDTDHQHTASHGEEEALKEDPPR. Residues 393-494 form the RWD domain; it reads QEFSLINVQI…RQLVSCLESF (102 aa). Serine 564 is modified (phosphoserine). A WD 8 repeat occupies 668–706; sequence LNVNDIQETCQKNAASALLVGRKDLVQVWSLATVATDLC. Phosphoserine occurs at positions 821, 822, and 830. A disordered region spans residues 831–852; it reads LTYSDPRERERDQHDKNKRLLD. Over residues 835-851 the composition is skewed to basic and acidic residues; sequence DPRERERDQHDKNKRLL. The C4-type zinc-finger motif lies at 901 to 920; it reads YCSHCRSEVRGTQCAICKGF. Zn(2+) is bound by residues cysteine 902, cysteine 905, cysteine 914, cysteine 917, cysteine 927, cysteine 938, histidine 943, histidine 946, histidine 949, cysteine 960, cysteine 964, cysteine 966, and cysteine 968. The segment at 921 to 973 adopts an RING-type; atypical zinc-finger fold; it reads TFQCAICHVAVRGSSNFCLTCGHGGHTSHMMEWFRTQEVCPTGCGCHCLLEST.

This sequence belongs to the WD repeat WDR59 family. Component of the GATOR2 subcomplex, composed of MIOS, SEC13, SEH1L, WDR24 and WDR59. The GATOR2 complex interacts with CASTOR1 and CASTOR2; the interaction is negatively regulated by arginine. The GATOR2 complex interacts with SESN1, SESN2 and SESN3; the interaction is negatively regulated by amino acids. Interacts with DDB1-CUL4A/B E3 ligase complexes.

It is found in the lysosome membrane. Its activity is regulated as follows. The GATOR2 complex is negatively regulated by the upstream amino acid sensors CASTOR1 and SESN2, which sequester the GATOR2 complex in absence of amino acids. In the presence of abundant amino acids, GATOR2 is released from CASTOR1 and SESN2 and activated. As a component of the GATOR2 complex, functions as an activator of the amino acid-sensing branch of the mTORC1 signaling pathway. The GATOR2 complex indirectly activates mTORC1 through the inhibition of the GATOR1 subcomplex. GATOR2 probably acts as an E3 ubiquitin-protein ligase toward GATOR1. In the presence of abundant amino acids, the GATOR2 complex mediates ubiquitination of the NPRL2 core component of the GATOR1 complex, leading to GATOR1 inactivation. In the absence of amino acids, GATOR2 is inhibited, activating the GATOR1 complex. This chain is GATOR2 complex protein WDR59, found in Homo sapiens (Human).